Here is a 21-residue protein sequence, read N- to C-terminus: Hydroxypicolinic acid-activating enzyme (21 aa).

In terms of biological role, involved in etamycin biosynthesis. In Streptomyces griseoviridis, this protein is Hydroxypicolinic acid-activating enzyme.